A 426-amino-acid chain; its full sequence is Tyrosine--tRNA ligase (426 aa).

L-tyrosine is bound at residue Y36. The 'HIGH' region signature appears at P41–H50. Y174 and Q178 together coordinate L-tyrosine. The 'KMSKS' region motif lies at K234–S238. ATP is bound at residue K237. One can recognise an S4 RNA-binding domain in the interval D359–G416.

Belongs to the class-I aminoacyl-tRNA synthetase family. TyrS type 1 subfamily. In terms of assembly, homodimer.

The protein localises to the cytoplasm. The enzyme catalyses tRNA(Tyr) + L-tyrosine + ATP = L-tyrosyl-tRNA(Tyr) + AMP + diphosphate + H(+). In terms of biological role, catalyzes the attachment of tyrosine to tRNA(Tyr) in a two-step reaction: tyrosine is first activated by ATP to form Tyr-AMP and then transferred to the acceptor end of tRNA(Tyr). The chain is Tyrosine--tRNA ligase from Mycobacterium leprae (strain TN).